The primary structure comprises 218 residues: Glutathione S-transferase Mu 4 (218 aa).

In terms of domain architecture, GST N-terminal spans 1-88 (MPMTLGYWDI…YIARKHNLCG (88 aa)). Residues 7–8 (YW), 46–50 (WLSEK), 59–60 (NL), and 72–73 (QS) each bind glutathione. The GST C-terminal domain occupies 90-208 (TEEEKIRVDI…KTSRFLRTPL (119 aa)). Tyr116 contributes to the substrate binding site.

It belongs to the GST superfamily. Mu family. As to quaternary structure, homodimer. Widely expressed.

The protein resides in the cytoplasm. It carries out the reaction RX + glutathione = an S-substituted glutathione + a halide anion + H(+). The catalysed reaction is 1-chloro-2,4-dinitrobenzene + glutathione = 2,4-dinitrophenyl-S-glutathione + chloride + H(+). It catalyses the reaction (13S,14S)-epoxy-(4Z,7Z,9E,11E,16Z,19Z)-docosahexaenoate + glutathione = (13R)-S-glutathionyl-(14S)-hydroxy-(4Z,7Z,9E,11E,16Z,19Z)-docosahexaenoate. The enzyme catalyses leukotriene C4 = leukotriene A4 + glutathione. Conjugation of reduced glutathione to a wide number of exogenous and endogenous hydrophobic electrophiles. Catalyzes the conjugation of leukotriene A4 with reduced glutathione (GSH) to form leukotriene C4. Can also catalyze the transfer of a glutathionyl group from glutathione (GSH) to 13(S),14(S)-epoxy-docosahexaenoic acid to form maresin conjugate in tissue regeneration 1 (MCTR1), a bioactive lipid mediator that possess potent anti-inflammatory and proresolving actions. In Mus musculus (Mouse), this protein is Glutathione S-transferase Mu 4.